Reading from the N-terminus, the 390-residue chain is 23S rRNA (uracil(747)-C(5))-methyltransferase RlmC (390 aa).

[4Fe-4S] cluster-binding residues include Cys-12, Cys-20, Cys-23, and Cys-100. S-adenosyl-L-methionine-binding residues include Gln-225, Phe-254, Glu-275, and Asn-322. Residue Cys-349 is the Nucleophile of the active site.

This sequence belongs to the class I-like SAM-binding methyltransferase superfamily. RNA M5U methyltransferase family. RlmC subfamily.

It carries out the reaction uridine(747) in 23S rRNA + S-adenosyl-L-methionine = 5-methyluridine(747) in 23S rRNA + S-adenosyl-L-homocysteine + H(+). Its function is as follows. Catalyzes the formation of 5-methyl-uridine at position 747 (m5U747) in 23S rRNA. The polypeptide is 23S rRNA (uracil(747)-C(5))-methyltransferase RlmC (Shewanella baltica (strain OS185)).